Reading from the N-terminus, the 417-residue chain is Serpin A9 (417 aa).

The first 23 residues, 1 to 23 (MASYLYGVLFAVGLCAPIYCVSP), serve as a signal peptide directing secretion. N-linked (GlcNAc...) asparagine glycosylation is found at Asn-101 and Asn-390.

It belongs to the serpin family. As to expression, highly expressed in normal germinal center (GC) B-cells and GC B-cell-derived malignancies.

It is found in the secreted. Its subcellular location is the cytoplasm. It localises to the membrane. In terms of biological role, protease inhibitor that inhibits trypsin and trypsin-like serine proteases (in vitro). Inhibits plasmin and thrombin with lower efficiency (in vitro). The polypeptide is Serpin A9 (SERPINA9) (Homo sapiens (Human)).